The sequence spans 271 residues: 3-methyl-2-oxobutanoate hydroxymethyltransferase (271 aa).

Mg(2+)-binding residues include aspartate 51 and aspartate 90. Residues 51 to 52 (DS), aspartate 90, and lysine 118 contribute to the 3-methyl-2-oxobutanoate site. Glutamate 120 contacts Mg(2+). The Proton acceptor role is filled by glutamate 186.

This sequence belongs to the PanB family. In terms of assembly, homodecamer; pentamer of dimers. Mg(2+) is required as a cofactor.

Its subcellular location is the cytoplasm. It catalyses the reaction 3-methyl-2-oxobutanoate + (6R)-5,10-methylene-5,6,7,8-tetrahydrofolate + H2O = 2-dehydropantoate + (6S)-5,6,7,8-tetrahydrofolate. It functions in the pathway cofactor biosynthesis; (R)-pantothenate biosynthesis; (R)-pantoate from 3-methyl-2-oxobutanoate: step 1/2. Its function is as follows. Catalyzes the reversible reaction in which hydroxymethyl group from 5,10-methylenetetrahydrofolate is transferred onto alpha-ketoisovalerate to form ketopantoate. The protein is 3-methyl-2-oxobutanoate hydroxymethyltransferase of Xanthomonas oryzae pv. oryzae (strain PXO99A).